Consider the following 264-residue polypeptide: Virulence plasmid protein pGP3-D (264 aa).

The chain is Virulence plasmid protein pGP3-D from Chlamydia muridarum (strain MoPn / Nigg).